Reading from the N-terminus, the 168-residue chain is MSDNAIHIDIMIEAGNWPDEASLESLVSKSVAAAWNNLGLKSATSELSVVFTDDASIQLLNGEWRGKDKPTNVLSFPAFPVKAGSQPGPMLGDIVIARETVEREAKEEGKPIENHLSHLVVHGFLHLLGYDHETDEEAEVMEAREREILHALAIPDPYAVSDEDINND.

Zn(2+) is bound by residues His122, His126, and His132.

The protein belongs to the endoribonuclease YbeY family. The cofactor is Zn(2+).

The protein resides in the cytoplasm. Single strand-specific metallo-endoribonuclease involved in late-stage 70S ribosome quality control and in maturation of the 3' terminus of the 16S rRNA. This Brucella abortus (strain 2308) protein is Endoribonuclease YbeY.